The following is a 380-amino-acid chain: L-lactate dehydrogenase (380 aa).

Residues 1 to 380 (MIISSASDYR…DASILVKAVA (380 aa)) form the FMN hydroxy acid dehydrogenase domain. Tyr24 lines the substrate pocket. FMN-binding residues include Ser106 and Gln127. Tyr129 contacts substrate. Position 155 (Thr155) interacts with FMN. Residue Arg164 coordinates substrate. An FMN-binding site is contributed by Lys251. His275 serves as the catalytic Proton acceptor. Arg278 is a substrate binding site. 306–330 (DSGIRSGLDVVRMLALGAKGVLLGR) contributes to the FMN binding site.

This sequence belongs to the FMN-dependent alpha-hydroxy acid dehydrogenase family. As to quaternary structure, homotetramer. Requires FMN as cofactor.

The protein localises to the cell inner membrane. The enzyme catalyses (S)-lactate + A = pyruvate + AH2. Its function is as follows. Catalyzes the conversion of L-lactate to pyruvate. Is coupled to the respiratory chain. The chain is L-lactate dehydrogenase from Pseudomonas syringae pv. syringae (strain B728a).